Consider the following 423-residue polypeptide: 3-phosphoshikimate 1-carboxyvinyltransferase (423 aa).

3 residues coordinate 3-phosphoshikimate: K28, S29, and R33. Residue K28 coordinates phosphoenolpyruvate. 2 residues coordinate phosphoenolpyruvate: G96 and R124. 3-phosphoshikimate contacts are provided by S169, S170, Q171, S198, E312, and H339. Residue Q171 participates in phosphoenolpyruvate binding. The active-site Proton acceptor is the E312. 3 residues coordinate phosphoenolpyruvate: R343, R384, and K409.

It belongs to the EPSP synthase family. Monomer.

It is found in the cytoplasm. The catalysed reaction is 3-phosphoshikimate + phosphoenolpyruvate = 5-O-(1-carboxyvinyl)-3-phosphoshikimate + phosphate. It participates in metabolic intermediate biosynthesis; chorismate biosynthesis; chorismate from D-erythrose 4-phosphate and phosphoenolpyruvate: step 6/7. Catalyzes the transfer of the enolpyruvyl moiety of phosphoenolpyruvate (PEP) to the 5-hydroxyl of shikimate-3-phosphate (S3P) to produce enolpyruvyl shikimate-3-phosphate and inorganic phosphate. The chain is 3-phosphoshikimate 1-carboxyvinyltransferase from Acidothermus cellulolyticus (strain ATCC 43068 / DSM 8971 / 11B).